We begin with the raw amino-acid sequence, 160 residues long: MAPK regulated corepressor interacting protein 2 (160 aa).

Residue Met-1 is modified to N-acetylmethionine. A disordered region spans residues 1-22 (MYTITKGPSKLVAQRRTGPTQQ). At Arg-35 the chain carries Omega-N-methylarginine. The interval 43-64 (LPAHLQPSAQTQGPWPLASSGP) is disordered. Residue Ser-61 is modified to Phosphoserine. Position 65 is an omega-N-methylarginine (Arg-65). Ser-82 carries the post-translational modification Phosphoserine.

Belongs to the MCRIP family. Interacts with DDX6. Interacts with MCRIP1.

It is found in the cytoplasm. Its subcellular location is the stress granule. It localises to the nucleus. This Mus musculus (Mouse) protein is MAPK regulated corepressor interacting protein 2 (Mcrip2).